A 142-amino-acid polypeptide reads, in one-letter code: Interleukin-3 (142 aa).

An N-terminal signal peptide occupies residues 1 to 18 (MSHLPILLLLLLVSPGLQ). Residues asparagine 33, asparagine 88, and asparagine 108 are each glycosylated (N-linked (GlcNAc...) asparagine). Cysteine 34 and cysteine 102 are oxidised to a cystine.

It belongs to the IL-3 family. Monomer. Activated T-cells, mast cells, natural killer cells.

The protein resides in the secreted. In terms of biological role, granulocyte/macrophage colony-stimulating factors are cytokines that act in hematopoiesis by controlling the production, differentiation, and function of 2 related white cell populations of the blood, the granulocytes and the monocytes-macrophages. Its function is as follows. This CSF induces granulocytes, macrophages, mast cells, stem cells, erythroid cells, eosinophils and megakaryocytes. The chain is Interleukin-3 (IL3) from Saguinus oedipus (Cotton-top tamarin).